A 363-amino-acid chain; its full sequence is uncharacterized protein (363 aa).

29-36 is a binding site for ATP; sequence GSINSGKT.

It belongs to the archaeal ATPase family.

This is an uncharacterized protein from Methanocaldococcus jannaschii (strain ATCC 43067 / DSM 2661 / JAL-1 / JCM 10045 / NBRC 100440) (Methanococcus jannaschii).